Consider the following 153-residue polypeptide: Small ribosomal subunit protein bS16 (153 aa).

This sequence belongs to the bacterial ribosomal protein bS16 family.

The polypeptide is Small ribosomal subunit protein bS16 (Leifsonia xyli subsp. xyli (strain CTCB07)).